The sequence spans 416 residues: Glutamyl-tRNA reductase (416 aa).

Substrate contacts are provided by residues T49–R52, S105, E110–Q112, and Q116. Catalysis depends on C50, which acts as the Nucleophile. G185–I190 lines the NADP(+) pocket.

This sequence belongs to the glutamyl-tRNA reductase family. Homodimer.

It catalyses the reaction (S)-4-amino-5-oxopentanoate + tRNA(Glu) + NADP(+) = L-glutamyl-tRNA(Glu) + NADPH + H(+). It functions in the pathway porphyrin-containing compound metabolism; protoporphyrin-IX biosynthesis; 5-aminolevulinate from L-glutamyl-tRNA(Glu): step 1/2. Catalyzes the NADPH-dependent reduction of glutamyl-tRNA(Glu) to glutamate 1-semialdehyde (GSA). The protein is Glutamyl-tRNA reductase of Shewanella piezotolerans (strain WP3 / JCM 13877).